We begin with the raw amino-acid sequence, 200 residues long: Adenylate kinase (200 aa).

10–15 (GAGKGT) contacts ATP. Residues 30–59 (STGDMLRAAVAAETPVGLEAKAIMESGGLV) form an NMP region. AMP-binding positions include Thr-31, Arg-36, 57–59 (GLV), 85–88 (GFPR), and Gln-92. The interval 126-142 (KRAEETAARGQPVRKDD) is LID. Position 127 (Arg-127) interacts with ATP. AMP is bound by residues Arg-139 and Arg-150. Residue Lys-178 participates in ATP binding.

The protein belongs to the adenylate kinase family. As to quaternary structure, monomer.

The protein localises to the cytoplasm. It catalyses the reaction AMP + ATP = 2 ADP. It functions in the pathway purine metabolism; AMP biosynthesis via salvage pathway; AMP from ADP: step 1/1. In terms of biological role, catalyzes the reversible transfer of the terminal phosphate group between ATP and AMP. Plays an important role in cellular energy homeostasis and in adenine nucleotide metabolism. The polypeptide is Adenylate kinase (Methylorubrum extorquens (strain CM4 / NCIMB 13688) (Methylobacterium extorquens)).